Reading from the N-terminus, the 472-residue chain is Ribulose bisphosphate carboxylase large chain (472 aa).

Positions 115 and 165 each coordinate substrate. K167 acts as the Proton acceptor in catalysis. A substrate-binding site is contributed by K169. Mg(2+) contacts are provided by K193, D195, and E196. Residue K193 is modified to N6-carboxylysine. H286 serves as the catalytic Proton acceptor. Positions 287, 319, and 371 each coordinate substrate.

It belongs to the RuBisCO large chain family. Type I subfamily. As to quaternary structure, heterohexadecamer of 8 large chains and 8 small chains. Requires Mg(2+) as cofactor.

It catalyses the reaction 2 (2R)-3-phosphoglycerate + 2 H(+) = D-ribulose 1,5-bisphosphate + CO2 + H2O. The enzyme catalyses D-ribulose 1,5-bisphosphate + O2 = 2-phosphoglycolate + (2R)-3-phosphoglycerate + 2 H(+). Functionally, ruBisCO catalyzes two reactions: the carboxylation of D-ribulose 1,5-bisphosphate, the primary event in carbon dioxide fixation, as well as the oxidative fragmentation of the pentose substrate. Both reactions occur simultaneously and in competition at the same active site. The protein is Ribulose bisphosphate carboxylase large chain of Solemya velum gill symbiont.